Consider the following 198-residue polypeptide: Ribonuclease HII (198 aa).

The region spanning 11 to 198 is the RNase H type-2 domain; sequence NLIAGVDEVG…GPVKRVLGLV (188 aa). The a divalent metal cation site is built by Asp-17, Glu-18, and Asp-109.

This sequence belongs to the RNase HII family. Mn(2+) is required as a cofactor. It depends on Mg(2+) as a cofactor.

The protein resides in the cytoplasm. The enzyme catalyses Endonucleolytic cleavage to 5'-phosphomonoester.. Endonuclease that specifically degrades the RNA of RNA-DNA hybrids. This is Ribonuclease HII from Yersinia pseudotuberculosis serotype O:1b (strain IP 31758).